Here is a 794-residue protein sequence, read N- to C-terminus: E3 ubiquitin-protein ligase wwp-1 (794 aa).

A compositionally biased stretch (low complexity) spans 1 to 16 (MARNEPSSQQPSSSGS). 2 disordered regions span residues 1-31 (MARN…KPSK) and 155-198 (RSAG…AAPT). The region spanning 10 to 124 (QPSSSGSNGT…TRNENGEFKN (115 aa)) is the C2 domain. Over residues 17 to 27 (NGTPAQQNGSA) the composition is skewed to polar residues. Residues 161-186 (AETAASASSEASTSNGVATSSSARRP) are compositionally biased toward low complexity. WW domains lie at 219 to 252 (EQLP…RPST), 253 to 286 (QPLP…RPTA), 324 to 358 (GPLP…DPRT), and 366 to 399 (QPLP…DPRT). The HECT domain maps to 460–794 (NAVDLRRRLY…IEMTEGFGNE (335 aa)). Cys762 acts as the Glycyl thioester intermediate in catalysis.

In terms of assembly, interacts (via WW domains) with Kruppel-like factor klf-1. Interacts with ubiquitin-conjugating enzyme E2 ubc-18. Expressed in neurons localized in the head and tail of adults.

It carries out the reaction S-ubiquitinyl-[E2 ubiquitin-conjugating enzyme]-L-cysteine + [acceptor protein]-L-lysine = [E2 ubiquitin-conjugating enzyme]-L-cysteine + N(6)-ubiquitinyl-[acceptor protein]-L-lysine.. The protein operates within protein modification; protein ubiquitination. In terms of biological role, E3 ubiquitin-protein ligase which accepts ubiquitin from an E2 ubiquitin-conjugating enzyme in the form of a thioester and then directly transfers the ubiquitin to targeted substrates. Ubiquitinates klf-1. Required for diet restriction-mediated lifespan extension, acting in concert with Kruppel-like factor klf-1 in the intestine to perhaps modulate genes involved in lipid metabolism. Probably acting downstream of the Insulin/IGF-1-like signaling (IIS) mediated pathway, plays a role in the immune response to infection by the Gram-negative bacterium P.aeruginosa, at least partly in response to bacterial pore-forming toxins. This chain is E3 ubiquitin-protein ligase wwp-1, found in Caenorhabditis elegans.